Consider the following 284-residue polypeptide: Tropomyosin beta chain (284 aa).

M1 is subject to N-acetylmethionine. Residues 1 to 284 (MEAIKKKMQM…DNALNDITSL (284 aa)) are a coiled coil. Composition is skewed to basic and acidic residues over residues 22-40 (AEQA…KQLE) and 51-66 (KGTE…SVKE). The interval 22-66 (AEQAEADKKQAEDRCKQLEEEQQGLQKKLKGTEDEVEKYSESVKE) is disordered.

The protein belongs to the tropomyosin family. In terms of assembly, homodimer. Heterodimer of an alpha (TPM1, TPM3 or TPM4) and a beta (TPM2) chain.

Its subcellular location is the cytoplasm. The protein localises to the cytoskeleton. Functionally, binds to actin filaments in muscle and non-muscle cells. Plays a central role, in association with the troponin complex, in the calcium dependent regulation of vertebrate striated muscle contraction. Smooth muscle contraction is regulated by interaction with caldesmon. In non-muscle cells is implicated in stabilizing cytoskeleton actin filaments. The polypeptide is Tropomyosin beta chain (TPM2) (Gallus gallus (Chicken)).